The following is a 118-amino-acid chain: Ribonuclease P protein component (118 aa).

It belongs to the RnpA family. In terms of assembly, consists of a catalytic RNA component (M1 or rnpB) and a protein subunit.

The enzyme catalyses Endonucleolytic cleavage of RNA, removing 5'-extranucleotides from tRNA precursor.. In terms of biological role, RNaseP catalyzes the removal of the 5'-leader sequence from pre-tRNA to produce the mature 5'-terminus. It can also cleave other RNA substrates such as 4.5S RNA. The protein component plays an auxiliary but essential role in vivo by binding to the 5'-leader sequence and broadening the substrate specificity of the ribozyme. This chain is Ribonuclease P protein component, found in Mycoplasma pneumoniae (strain ATCC 29342 / M129 / Subtype 1) (Mycoplasmoides pneumoniae).